The sequence spans 434 residues: Enolase (434 aa).

Glutamine 163 is a binding site for (2R)-2-phosphoglycerate. Glutamate 205 acts as the Proton donor in catalysis. The Mg(2+) site is built by aspartate 242, glutamate 289, and aspartate 316. (2R)-2-phosphoglycerate-binding residues include lysine 341, arginine 370, serine 371, and lysine 392. Lysine 341 acts as the Proton acceptor in catalysis.

Belongs to the enolase family. The cofactor is Mg(2+).

It localises to the cytoplasm. It is found in the secreted. The protein resides in the cell surface. It catalyses the reaction (2R)-2-phosphoglycerate = phosphoenolpyruvate + H2O. Its pathway is carbohydrate degradation; glycolysis; pyruvate from D-glyceraldehyde 3-phosphate: step 4/5. Functionally, catalyzes the reversible conversion of 2-phosphoglycerate (2-PG) into phosphoenolpyruvate (PEP). It is essential for the degradation of carbohydrates via glycolysis. The protein is Enolase of Lacticaseibacillus paracasei (strain ATCC 334 / BCRC 17002 / CCUG 31169 / CIP 107868 / KCTC 3260 / NRRL B-441) (Lactobacillus paracasei).